We begin with the raw amino-acid sequence, 126 residues long: Small ribosomal subunit protein uS13 (126 aa).

The segment at 95 to 126 is disordered; it reads GLPVRGQRTHTNARTRKGPRKTVAGKKKPGKK.

The protein belongs to the universal ribosomal protein uS13 family. Part of the 30S ribosomal subunit. Forms a loose heterodimer with protein S19. Forms two bridges to the 50S subunit in the 70S ribosome.

In terms of biological role, located at the top of the head of the 30S subunit, it contacts several helices of the 16S rRNA. In the 70S ribosome it contacts the 23S rRNA (bridge B1a) and protein L5 of the 50S subunit (bridge B1b), connecting the 2 subunits; these bridges are implicated in subunit movement. Contacts the tRNAs in the A and P-sites. The polypeptide is Small ribosomal subunit protein uS13 (Acidothermus cellulolyticus (strain ATCC 43068 / DSM 8971 / 11B)).